A 333-amino-acid chain; its full sequence is Protein farnesyltransferase/geranylgeranyltransferase type-1 subunit alpha (333 aa).

5 PFTA repeats span residues 61–95 (LSSR…SLKV), 96–130 (DLHV…KLGP), 132–166 (ARNS…NLGG), 167–200 (WEDE…RSPV), and 207–241 (MRES…DEST).

This sequence belongs to the protein prenyltransferase subunit alpha family. Heterodimer of FTA and FTB (farnesyltransferase). Heterodimer of an alpha and a beta subunit. Mg(2+) is required as a cofactor.

It carries out the reaction L-cysteinyl-[protein] + (2E,6E)-farnesyl diphosphate = S-(2E,6E)-farnesyl-L-cysteinyl-[protein] + diphosphate. The catalysed reaction is geranylgeranyl diphosphate + L-cysteinyl-[protein] = S-geranylgeranyl-L-cysteinyl-[protein] + diphosphate. Its function is as follows. Essential subunit of both the farnesyltransferase and the geranylgeranyltransferase complex. Contributes to the transfer of a farnesyl or geranylgeranyl moiety from farnesyl or geranylgeranyl diphosphate to a cysteine at the fourth position from the C-terminus of several proteins having the C-terminal sequence Cys-aliphatic-aliphatic-X. This chain is Protein farnesyltransferase/geranylgeranyltransferase type-1 subunit alpha (FTA), found in Pisum sativum (Garden pea).